A 444-amino-acid chain; its full sequence is MMEFFPEIPKIQFEGKESTNPLAFKFYDPNEVIDGKPLKDHLKFSVAFWHTFVNEGRDPFGDPTAERPWNRFSDPMDKAFARVDALFEFCEKLNIEYFCFHDRDIAPEGKTLRETNKILDKVVERIKERMKDSNVKLLWGTANLFSHPRYMHGAATTCSADVFAYAAAQVKKALEITKELGGEGYVFWGGREGYETLLNTDLGLELENLARFLRMAVEYAKKIGFTGQFLIEPKPKEPTKHQYDFDVATAYAFLKNHGLDEYFKFNIEANHATLAGHTFQHELRMARILGKLGSIDANQGDLLLGWDTDQFPTNIYDTTLAMYEVIKAGGFTKGGLNFDAKVRRASYKVEDLFIGHIAGMDTFALGFKIAYKLAKDGVFDKFIEEKYRSFKEGIGKEIVEGKTDFEKLEEYIIDKEDIELPSGKQEYLESLLNSYIVKTIAELR.

Active-site residues include His-101 and Asp-104. Glu-232, Glu-268, His-271, Asp-296, Asp-307, Asp-309, and Asp-339 together coordinate Mg(2+).

The protein belongs to the xylose isomerase family. As to quaternary structure, homotetramer. Mg(2+) is required as a cofactor.

It is found in the cytoplasm. It carries out the reaction alpha-D-xylose = alpha-D-xylulofuranose. The polypeptide is Xylose isomerase (Thermotoga sp. (strain RQ2)).